Consider the following 362-residue polypeptide: Cobalt-precorrin-5B C(1)-methyltransferase (362 aa).

The protein belongs to the CbiD family.

It carries out the reaction Co-precorrin-5B + S-adenosyl-L-methionine = Co-precorrin-6A + S-adenosyl-L-homocysteine. It functions in the pathway cofactor biosynthesis; adenosylcobalamin biosynthesis; cob(II)yrinate a,c-diamide from sirohydrochlorin (anaerobic route): step 6/10. Catalyzes the methylation of C-1 in cobalt-precorrin-5B to form cobalt-precorrin-6A. This chain is Cobalt-precorrin-5B C(1)-methyltransferase, found in Burkholderia orbicola (strain MC0-3).